The primary structure comprises 274 residues: 2,3,4,5-tetrahydropyridine-2,6-dicarboxylate N-succinyltransferase (274 aa).

Substrate contacts are provided by arginine 104 and aspartate 141.

This sequence belongs to the transferase hexapeptide repeat family. In terms of assembly, homotrimer.

The protein resides in the cytoplasm. It catalyses the reaction (S)-2,3,4,5-tetrahydrodipicolinate + succinyl-CoA + H2O = (S)-2-succinylamino-6-oxoheptanedioate + CoA. The protein operates within amino-acid biosynthesis; L-lysine biosynthesis via DAP pathway; LL-2,6-diaminopimelate from (S)-tetrahydrodipicolinate (succinylase route): step 1/3. The protein is 2,3,4,5-tetrahydropyridine-2,6-dicarboxylate N-succinyltransferase of Salmonella typhi.